Here is a 382-residue protein sequence, read N- to C-terminus: Gap junction alpha-1 protein (382 aa).

The Cytoplasmic portion of the chain corresponds to 2 to 23 (GDWSALGKLLDKVQAYSTAGGK). Serine 5 bears the Phosphoserine mark. A helical membrane pass occupies residues 24 to 44 (VWLSVLFIFRILLLGTAVESA). The Extracellular portion of the chain corresponds to 45–76 (WGDEQSAFRCNTQQPGCENVCYDKSFPISHVR). Intrachain disulfides connect cysteine 54–cysteine 192 and cysteine 187–cysteine 198. A helical transmembrane segment spans residues 77–97 (FWVLQIIFVSVPTLLYLAHVF). Over 98-155 (YVMRKEEKLNKKEEELKVAQTDGANVDMHLKQIEIKKFKYGIEEHGKVKMRGGLLRTY) the chain is Cytoplasmic. Residue lysine 144 forms a Glycyl lysine isopeptide (Lys-Gly) (interchain with G-Cter in SUMO) linkage. The chain crosses the membrane as a helical span at residues 156-176 (IISILFKSVFEVAFLLIQWYI). At 177-207 (YGFSLSAVYTCKRDPCPHQVDCFLSRPTEKT) the chain is on the extracellular side. A helical membrane pass occupies residues 208–228 (IFIIFMLVVSLVSLALNIIEL). Residues 229 to 382 (FYVFFKGIKD…SRPRPDDLEI (154 aa)) are Cytoplasmic-facing. Lysine 237 participates in a covalent cross-link: Glycyl lysine isopeptide (Lys-Gly) (interchain with G-Cter in SUMO). The tract at residues 244 to 382 (SDLYHATTGP…SRPRPDDLEI (139 aa)) is interaction with NOV. Tyrosine 247 is modified (phosphotyrosine). 3 positions are modified to phosphoserine: serine 255, serine 257, and serine 262. Residues 264 to 382 (TYAYFNGCSS…SRPRPDDLEI (119 aa)) are interaction with UBQLN4. Cysteine 271 carries the S-nitrosocysteine modification. A Phosphothreonine modification is found at threonine 275. Phosphoserine is present on residues serine 306 and serine 314. The segment covering 317–332 (QNRMGQAGSTISNSHA) has biased composition (polar residues). The segment at 317–382 (QNRMGQAGST…SRPRPDDLEI (66 aa)) is disordered. At serine 325 the chain carries Phosphoserine; by CK1. Threonine 326 carries the post-translational modification Phosphothreonine. A phosphoserine; by CK1 mark is found at serine 328 and serine 330. Residues serine 344 and serine 365 each carry the phosphoserine modification. The span at 362 to 374 (RPSSRASSRASSR) shows a compositional bias: low complexity. Residue serine 368 is modified to Phosphoserine; by PKC/PRKCG and PKC/PRKCD. Residues serine 369 and serine 373 each carry the phosphoserine modification.

The protein belongs to the connexin family. Alpha-type (group II) subfamily. As to quaternary structure, a connexon is composed of a hexamer of connexins. Interacts with SGSM3. Interacts with RIC1/CIP150. Interacts with CNST and CSNK1D. Interacts (via C-terminus) with TJP1. Interacts (via C-terminus) with SRC (via SH3 domain). Interacts (not ubiquitinated) with UBQLN4 (via UBA domain). Interacts with NOV. Interacts with TMEM65. Interacts with ANK3/ANKG and PKP2. Phosphorylation at Ser-325, Ser-328 and Ser-330 by CK1 modulates gap junction assembly. Phosphorylated at Ser-368 by PRKCG; phosphorylation induces disassembly of gap junction plaques and inhibition of gap junction activity. Phosphorylation at Ser-368 by PRKCD triggers its internalization into small vesicles leading to proteasome-mediated degradation. In terms of processing, sumoylated with SUMO1, SUMO2 and SUMO3, which may regulate the level of functional Cx43 gap junctions at the plasma membrane. May be desumoylated by SENP1 or SENP2. Post-translationally, S-nitrosylation at Cys-271 is enriched at the muscle endothelial gap junction in arteries, it augments channel permeability and may regulate of smooth muscle cell to endothelial cell communication. Acetylated in the developing cortex; leading to delocalization from the cell membrane.

It is found in the cell membrane. Its subcellular location is the cell junction. The protein resides in the gap junction. The protein localises to the endoplasmic reticulum. Functionally, gap junction protein that acts as a regulator of bladder capacity. A gap junction consists of a cluster of closely packed pairs of transmembrane channels, the connexons, through which materials of low MW diffuse from one cell to a neighboring cell. May play a critical role in the physiology of hearing by participating in the recycling of potassium to the cochlear endolymph. Negative regulator of bladder functional capacity: acts by enhancing intercellular electrical and chemical transmission, thus sensitizing bladder muscles to cholinergic neural stimuli and causing them to contract. May play a role in cell growth inhibition through the regulation of NOV expression and localization. Plays an essential role in gap junction communication in the ventricles. This Erinaceus europaeus (Western European hedgehog) protein is Gap junction alpha-1 protein (GJA1).